Reading from the N-terminus, the 597-residue chain is Adenine deaminase 2 (597 aa).

The protein belongs to the metallo-dependent hydrolases superfamily. Adenine deaminase family. Mn(2+) is required as a cofactor.

The catalysed reaction is adenine + H2O + H(+) = hypoxanthine + NH4(+). The sequence is that of Adenine deaminase 2 from Agrobacterium fabrum (strain C58 / ATCC 33970) (Agrobacterium tumefaciens (strain C58)).